A 271-amino-acid polypeptide reads, in one-letter code: 3-methyl-2-oxobutanoate hydroxymethyltransferase (271 aa).

Residues D53 and D92 each contribute to the Mg(2+) site. Residues D53–S54, D92, and K120 contribute to the 3-methyl-2-oxobutanoate site. E122 serves as a coordination point for Mg(2+). E189 serves as the catalytic Proton acceptor.

The protein belongs to the PanB family. As to quaternary structure, homodecamer; pentamer of dimers. It depends on Mg(2+) as a cofactor.

The protein localises to the cytoplasm. The catalysed reaction is 3-methyl-2-oxobutanoate + (6R)-5,10-methylene-5,6,7,8-tetrahydrofolate + H2O = 2-dehydropantoate + (6S)-5,6,7,8-tetrahydrofolate. It functions in the pathway cofactor biosynthesis; (R)-pantothenate biosynthesis; (R)-pantoate from 3-methyl-2-oxobutanoate: step 1/2. In terms of biological role, catalyzes the reversible reaction in which hydroxymethyl group from 5,10-methylenetetrahydrofolate is transferred onto alpha-ketoisovalerate to form ketopantoate. This is 3-methyl-2-oxobutanoate hydroxymethyltransferase from Paraburkholderia phytofirmans (strain DSM 17436 / LMG 22146 / PsJN) (Burkholderia phytofirmans).